The chain runs to 552 residues: uncharacterized protein (552 aa).

The region spanning 8 to 200 is the DhaL domain; it reads KLFADMIIQG…LLCVYEGFLK (193 aa).

This is an uncharacterized protein from Staphylococcus haemolyticus (strain JCSC1435).